A 310-amino-acid polypeptide reads, in one-letter code: Methionyl-tRNA formyltransferase (310 aa).

Serine 108–proline 111 is a binding site for (6S)-5,6,7,8-tetrahydrofolate.

This sequence belongs to the Fmt family.

It carries out the reaction L-methionyl-tRNA(fMet) + (6R)-10-formyltetrahydrofolate = N-formyl-L-methionyl-tRNA(fMet) + (6S)-5,6,7,8-tetrahydrofolate + H(+). Its function is as follows. Attaches a formyl group to the free amino group of methionyl-tRNA(fMet). The formyl group appears to play a dual role in the initiator identity of N-formylmethionyl-tRNA by promoting its recognition by IF2 and preventing the misappropriation of this tRNA by the elongation apparatus. The sequence is that of Methionyl-tRNA formyltransferase from Fusobacterium nucleatum subsp. nucleatum (strain ATCC 25586 / DSM 15643 / BCRC 10681 / CIP 101130 / JCM 8532 / KCTC 2640 / LMG 13131 / VPI 4355).